An 844-amino-acid chain; its full sequence is Meiosis-specific protein PAIR3 (844 aa).

Disordered stretches follow at residues 41–389 (TSSV…RERR), 418–506 (KLSS…RFSD), 532–604 (DDLF…QISI), and 616–669 (WLSD…EPEK). Residues 106–120 (QPDDNAIEQTGTFSF) are compositionally biased toward polar residues. 2 stretches are compositionally biased toward basic and acidic residues: residues 122–134 (TRREQDSHLDQLD) and 145–164 (RQVESADKNKPNSEMLRMKL). Composition is skewed to polar residues over residues 191 to 208 (QPKSQIANGPSSGRQKVF) and 218 to 229 (TPAQFNSQTANK). 2 stretches are compositionally biased toward basic and acidic residues: residues 256–270 (RKKEPTGSTHQDKSG) and 324–363 (AKVEPKKAHCSDRISHKTTQDDMERKVPSKYIPSEKKGEK). Polar residues-rich tracts occupy residues 364–382 (TNSFSSLSRTGKTAESCSR) and 420–440 (SSPQLTSFKSKGKCSSISPQQ). The segment covering 441 to 456 (KENDNTHIPEASDRTA) has biased composition (basic and acidic residues). Over residues 459 to 473 (NSFNSTPSPAANPSP) the composition is skewed to low complexity. Residues 545–554 (RSRSTSFTSD) are compositionally biased toward polar residues. A compositionally biased stretch (basic and acidic residues) spans 616 to 640 (WLSDVDSPDKSSIEHLGRKSHLKEG). Residues 646–661 (QLTSPTHFATSGTQET) show a composition bias toward polar residues. A coiled-coil region spans residues 731–765 (VNAGKSKRKRLESTFEEQQEKLRILHEKFKEEVNQ).

In terms of tissue distribution, expressed in pollen mother cells and the ovule tissues during meiosis.

Its subcellular location is the chromosome. It localises to the nucleus. Plays a crucial role in homologous chromosome pairing and synapsis in meiosis. Does not seem required for cytokinesis. Is essential for meiotic bouquet formation, homologous chromosome pairing and normal recombination, and synaptonemal complex (SC) assembly. Required for the proper association of PAIR2 with chromosomes. This is Meiosis-specific protein PAIR3 from Oryza sativa subsp. japonica (Rice).